We begin with the raw amino-acid sequence, 734 residues long: 5-methyltetrahydropteroyltriglutamate--homocysteine methyltransferase (734 aa).

5-methyltetrahydropteroyltri-L-glutamate is bound by residues 15-18 (REFK) and Lys104. Residues 409–411 (IGS) and Glu462 contribute to the L-homocysteine site. Residues 409–411 (IGS) and Glu462 each bind L-methionine. Residues 493 to 494 (RC) and Trp539 contribute to the 5-methyltetrahydropteroyltri-L-glutamate site. Asp577 provides a ligand contact to L-homocysteine. An L-methionine-binding site is contributed by Asp577. Glu583 provides a ligand contact to 5-methyltetrahydropteroyltri-L-glutamate. Positions 618, 620, and 642 each coordinate Zn(2+). Catalysis depends on His672, which acts as the Proton donor. Cys704 is a Zn(2+) binding site.

This sequence belongs to the vitamin-B12 independent methionine synthase family. It depends on Zn(2+) as a cofactor.

It catalyses the reaction 5-methyltetrahydropteroyltri-L-glutamate + L-homocysteine = tetrahydropteroyltri-L-glutamate + L-methionine. It participates in amino-acid biosynthesis; L-methionine biosynthesis via de novo pathway; L-methionine from L-homocysteine (MetE route): step 1/1. Catalyzes the transfer of a methyl group from 5-methyltetrahydrofolate to homocysteine resulting in methionine formation. This chain is 5-methyltetrahydropteroyltriglutamate--homocysteine methyltransferase, found in Thermotoga maritima (strain ATCC 43589 / DSM 3109 / JCM 10099 / NBRC 100826 / MSB8).